Here is a 209-residue protein sequence, read N- to C-terminus: dTTP/UTP pyrophosphatase (209 aa).

The active-site Proton acceptor is the D79.

This sequence belongs to the Maf family. YhdE subfamily. It depends on a divalent metal cation as a cofactor.

The protein localises to the cytoplasm. It carries out the reaction dTTP + H2O = dTMP + diphosphate + H(+). It catalyses the reaction UTP + H2O = UMP + diphosphate + H(+). Its function is as follows. Nucleoside triphosphate pyrophosphatase that hydrolyzes dTTP and UTP. May have a dual role in cell division arrest and in preventing the incorporation of modified nucleotides into cellular nucleic acids. In Bradyrhizobium diazoefficiens (strain JCM 10833 / BCRC 13528 / IAM 13628 / NBRC 14792 / USDA 110), this protein is dTTP/UTP pyrophosphatase.